Consider the following 258-residue polypeptide: UPF0246 protein Pnap_3166 (258 aa).

The protein belongs to the UPF0246 family.

In Polaromonas naphthalenivorans (strain CJ2), this protein is UPF0246 protein Pnap_3166.